The following is a 488-amino-acid chain: Dihydrolipoyl dehydrogenase, mitochondrial (488 aa).

The transit peptide at 1–25 (MLRINRISNLRTFGQRFFSTEQQDV) directs the protein to the mitochondrion. Residues 52–61 (EKRGKLGGTC), K70, G134, and 163–165 (TGS) contribute to the FAD site. A disulfide bond links C61 and C66. NAD(+) is bound by residues 200-207 (GGGVIGLE), E223, V257, and G294. Residues D335 and 341 to 344 (MLAH) contribute to the FAD site. The active-site Proton acceptor is the H467.

It belongs to the class-I pyridine nucleotide-disulfide oxidoreductase family. FAD serves as cofactor.

The protein resides in the mitochondrion matrix. The enzyme catalyses N(6)-[(R)-dihydrolipoyl]-L-lysyl-[protein] + NAD(+) = N(6)-[(R)-lipoyl]-L-lysyl-[protein] + NADH + H(+). The chain is Dihydrolipoyl dehydrogenase, mitochondrial (lpd) from Dictyostelium discoideum (Social amoeba).